Consider the following 201-residue polypeptide: Small ribosomal subunit protein uS4c (201 aa).

The segment at 15-43 (LGALPGLTRKRPRSGSDLRNQSRSGKRSQ) is disordered. The S4 RNA-binding domain maps to 89 to 150 (MRLDNILFRL…EQRSRALIQN (62 aa)).

This sequence belongs to the universal ribosomal protein uS4 family. Part of the 30S ribosomal subunit. Contacts protein S5. The interaction surface between S4 and S5 is involved in control of translational fidelity.

The protein localises to the plastid. It localises to the chloroplast. Its function is as follows. One of the primary rRNA binding proteins, it binds directly to 16S rRNA where it nucleates assembly of the body of the 30S subunit. Functionally, with S5 and S12 plays an important role in translational accuracy. The protein is Small ribosomal subunit protein uS4c (rps4) of Drimys granadensis.